The sequence spans 451 residues: Uronate isomerase (451 aa).

Belongs to the metallo-dependent hydrolases superfamily. Uronate isomerase family. Homotrimer.

The enzyme catalyses D-glucuronate = D-fructuronate. It carries out the reaction aldehydo-D-galacturonate = keto-D-tagaturonate. Its pathway is carbohydrate metabolism; pentose and glucuronate interconversion. The chain is Uronate isomerase from Thermotoga maritima (strain ATCC 43589 / DSM 3109 / JCM 10099 / NBRC 100826 / MSB8).